The following is a 285-amino-acid chain: Single myb histone 3 (285 aa).

The interval 1-35 (MGAPKQKWTSEEEDALRRGVRKHGAGKWRTIQKDP) is disordered. Residues 1 to 60 (MGAPKQKWTSEEEDALRRGVRKHGAGKWRTIQKDPQFSPILSSRSNIDLKDKWRNLSFSA) enclose the HTH myb-type domain. A DNA-binding region (H-T-H motif) is located at residues 28 to 56 (WRTIQKDPQFSPILSSRSNIDLKDKWRNL). In terms of domain architecture, H15 spans 113 to 181 (TPPKYGAMIM…KVDNFYRLPD (69 aa)). Positions 226 to 255 (VKVTDAEAKAHDAHDQMMEAERMLKMAEDT) form a coiled coil.

Belongs to the histone H1/H5 family. SMH subfamily. As to quaternary structure, forms a homodimer and heterodimers.

Its subcellular location is the nucleus. It is found in the chromosome. The protein resides in the nucleolus. It localises to the telomere. Functionally, binds preferentially double-stranded telomeric repeats, but may also bind to the single telomeric strand. This Zea mays (Maize) protein is Single myb histone 3 (SMH3).